Here is a 63-residue protein sequence, read N- to C-terminus: Large ribosomal subunit protein uL29 (63 aa).

The protein belongs to the universal ribosomal protein uL29 family.

This is Large ribosomal subunit protein uL29 from Herminiimonas arsenicoxydans.